Reading from the N-terminus, the 91-residue chain is MNETEATLPVFTLEQVAEHHSPDDCWMAIHGKVYDLTPYVPNHPGPAGMMLVWCGQESTEAWETKSYGEPHSSLAARLLQRYLIGTLEEIT.

The Cytochrome b5 heme-binding domain occupies 8-88; it reads LPVFTLEQVA…LQRYLIGTLE (81 aa). The cysteines at positions 25 and 54 are disulfide-linked. Heme-binding residues include H43 and H71.

The polypeptide is Soluble cytochrome b558 (Ectothiorhodospira shaposhnikovii (Ectothiorhodospira vacuolata)).